A 120-amino-acid chain; its full sequence is uncharacterized protein (120 aa).

The 117-residue stretch at 4-120 folds into the VOC domain; the sequence is QIGTVAVYVE…EDGNVFLLKE (117 aa).

This is an uncharacterized protein from Bacillus subtilis (strain 168).